Consider the following 783-residue polypeptide: Cyclin-dependent kinase 11A (783 aa).

A compositionally biased stretch (basic and acidic residues) spans 18–58; the sequence is QEKKRRKEQEEKAEIKRLKNSDDRDSKRDSLEEGELRDHCM. The interval 18–396 is disordered; it reads QEKKRRKEQE…SALTEGDYVP (379 aa). S47 and S72 each carry phosphoserine. A compositionally biased stretch (basic residues) spans 95 to 125; it reads EKVHHRKDEKRKEKWKHARVKEREHERRKRH. 3 stretches are compositionally biased toward basic and acidic residues: residues 126 to 215, 226 to 241, and 252 to 264; these read REEQ…DKVK, PPRE…KPGE, and QLKE…RDLL. S271 carries the post-translational modification Phosphoserine. A compositionally biased stretch (low complexity) spans 279–290; sequence SAESSSAESGSG. 2 stretches are compositionally biased toward acidic residues: residues 291 to 352 and 371 to 380; these read SEEE…EERE and ESEEAEEEVG. One can recognise a Protein kinase domain in the interval 427-647; that stretch reads QCLNRIEEGT…VFKELGTPSE (221 aa). ATP is bound by residues 432-440 and K455; that span reads IEEGTYGVV. S470 is modified (phosphoserine; by CDK7). A Phosphothreonine; by CDK7 modification is found at T476. The active-site Proton acceptor is the D550. The residue at position 577 (S577) is a Phosphoserine. At Y582 the chain carries Phosphotyrosine. Phosphothreonine occurs at positions 583 and 739. Residues 721–783 are disordered; the sequence is SMFPTWPAKS…AAGPGFSLKF (63 aa). S740 carries the post-translational modification Phosphoserine.

This sequence belongs to the protein kinase superfamily. CMGC Ser/Thr protein kinase family. CDC2/CDKX subfamily. As to quaternary structure, the cleaved p110 isoform, p110C, binds to the serine/threonine kinase PAK1. The p58 isoform but not the p110 isoform or p110C interacts with CCND3. The p110 isoforms are found in large molecular weight complexes containing CCNL1 and SFRS7. Mg(2+) is required as a cofactor. Post-translationally, during apoptosis, induced by Fas or tumor necrosis factor, specific CKD11 p110 isoforms are cleaved by caspases to produce a protein (p110C) that contains the C-terminal kinase domain of the CDK11 proteins. In terms of tissue distribution, expressed ubiquitously. Some evidence of isoform-specific tissue distribution.

It localises to the cytoplasm. It is found in the nucleus. It catalyses the reaction L-seryl-[protein] + ATP = O-phospho-L-seryl-[protein] + ADP + H(+). The catalysed reaction is L-threonyl-[protein] + ATP = O-phospho-L-threonyl-[protein] + ADP + H(+). Its activity is regulated as follows. Phosphorylation at Thr-436 or Tyr-437 inactivates the enzyme, while phosphorylation at Thr-583 activates it. In terms of biological role, appears to play multiple roles in cell cycle progression, cytokinesis and apoptosis. The p110 isoforms have been suggested to be involved in pre-mRNA splicing, potentially by phosphorylating the splicing protein SFRS7. The p58 isoform may act as a negative regulator of normal cell cycle progression. The chain is Cyclin-dependent kinase 11A (CDK11A) from Homo sapiens (Human).